A 521-amino-acid polypeptide reads, in one-letter code: MSL complex subunit 3 (521 aa).

Residues 13 to 71 (SGEKVLCFEPDPTKARVLYDAKIVDVIVGKDEKGRKIPEYLIHFNGWNRSWDRWAAEDH) enclose the Tudor-knot domain. Disordered stretches follow at residues 114–166 (KGLP…TRRE) and 298–409 (ATST…PSKE). Acidic residues predominate over residues 139–149 (KDEEISEESDI). Residues 150-166 (EEKTEVKEEPELQTRRE) are compositionally biased toward basic and acidic residues. Positions 168–517 (EERTITIEIP…CEAHYSTKNP (350 aa)) constitute an MRG domain. Residues 290-440 (FFLPIKESAT…WKLVPDNYPP (151 aa)) are required for the histone acetyltransferase activity of the MSL complex. Phosphoserine is present on residues S309 and S311. A compositionally biased stretch (low complexity) spans 316–329 (NPSTPQSTESQPTT). Residues S367 and S400 each carry the phosphoserine modification. T405 bears the Phosphothreonine mark. Phosphoserine is present on residues S407 and S411.

As to quaternary structure, component of the MSL histone acetyltransferase complex at least composed of the KAT8/MOF, MSL1/hampin, MSL2 and MSL3. Interacts (via the MRG domain) with MSL1 and KAT8/MOF. Expressed in many tissues including liver, pancreas, heart, lung, kidney, skeletal muscle, brain, and placenta, with highest expression in skeletal muscle and heart.

The protein localises to the nucleus. Functionally, non-catalytic component of the MSL histone acetyltransferase complex, a multiprotein complex that mediates the majority of histone H4 acetylation at 'Lys-16' (H4K16ac), an epigenetic mark that prevents chromatin compaction. The MSL complex is required for chromosome stability and genome integrity by maintaining homeostatic levels of H4K16ac. The MSL complex is also involved in gene dosage by promoting up-regulation of genes expressed by the X chromosome. X up-regulation is required to compensate for autosomal biallelic expression. The MSL complex also participates in gene dosage compensation by promoting expression of Tsix non-coding RNA. Acts as a histone reader that specifically recognizes and binds histone H4 monomethylated at 'Lys-20' (H4K20Me1) in a DNA-dependent manner and is proposed to be involved in chromosomal targeting of the MSL complex. May play a role X inactivation in females. This Homo sapiens (Human) protein is MSL complex subunit 3.